The sequence spans 64 residues: Transcription factor P13 (64 aa).

Its function is as follows. Transcription factor that regulates expression of phage structural components with protein P14. The protein is Transcription factor P13 of Pseudoalteromonas phage PM2 (Bacteriophage PM2).